The following is a 29-amino-acid chain: Cytochrome b6-f complex subunit 8 (29 aa).

A helical membrane pass occupies residues 3–23 (IITFGWVAVAAFFALSIAFVV).

The protein belongs to the PetN family. As to quaternary structure, the 4 large subunits of the cytochrome b6-f complex are cytochrome b6, subunit IV (17 kDa polypeptide, PetD), cytochrome f and the Rieske protein, while the 4 small subunits are PetG, PetL, PetM and PetN. The complex functions as a dimer.

Its subcellular location is the cellular thylakoid membrane. Its function is as follows. Component of the cytochrome b6-f complex, which mediates electron transfer between photosystem II (PSII) and photosystem I (PSI), cyclic electron flow around PSI, and state transitions. This is Cytochrome b6-f complex subunit 8 from Synechococcus sp. (strain JA-3-3Ab) (Cyanobacteria bacterium Yellowstone A-Prime).